The sequence spans 284 residues: MEMO1 family protein YN1551_0739 (284 aa).

Belongs to the MEMO1 family.

This chain is MEMO1 family protein YN1551_0739, found in Saccharolobus islandicus (strain Y.N.15.51 / Yellowstone #2) (Sulfolobus islandicus).